The chain runs to 130 residues: MNLIAKLEQEEIERALAGKTIPEFAPGDTVIVNVNVVEGNRKRVQAYEGVVIAIRNRGLNSNFIVRKISSGEGVERTFQTYSPLLASIVVKRRGDVRRAKLYYLRERSGKSARIKEKLVSKDRTAAASQE.

It belongs to the bacterial ribosomal protein bL19 family.

Its function is as follows. This protein is located at the 30S-50S ribosomal subunit interface and may play a role in the structure and function of the aminoacyl-tRNA binding site. The protein is Large ribosomal subunit protein bL19 of Burkholderia vietnamiensis (strain G4 / LMG 22486) (Burkholderia cepacia (strain R1808)).